An 85-amino-acid polypeptide reads, in one-letter code: Large ribosomal subunit protein bL27 (85 aa).

Belongs to the bacterial ribosomal protein bL27 family.

The protein is Large ribosomal subunit protein bL27 of Azobacteroides pseudotrichonymphae genomovar. CFP2.